We begin with the raw amino-acid sequence, 926 residues long: Armadillo repeat-containing protein 5 (926 aa).

Residues 82–104 (PAPSQAASGSAPSSVASAGSTPG) show a composition bias toward low complexity. The disordered stretch occupies residues 82–111 (PAPSQAASGSAPSSVASAGSTPGHAPAAES). ARM repeat units lie at residues 139–179 (GACR…NLAM), 181–221 (PESC…NLAD), 223–263 (PQHR…ELSR), 267–306 (RACA…NLCA), 307–354 (QGLV…LCRE), 355–399 (AINR…DTGA), and 401–440 (GKLQ…EERT). Ser-337 is modified (phosphoserine). The segment at 472–516 (WSPERCPMPEPSESVSPTPGQTSMSTPRTLRKPGRIPAATPEEPW) is disordered. A compositionally biased stretch (polar residues) spans 484-499 (ESVSPTPGQTSMSTPR). Residues 745–813 (PDLHFVLDSG…LHGCRGCGAA (69 aa)) enclose the BTB domain.

As to quaternary structure, substrate-recognition component of the BCR(ARMC5) E3 ubiquitin ligase complex, at least composed of CUL3, ARMC5 and RBX1. Ubiquitinated by a BCR (BTB-CUL3-RBX1) E3 ubiquitin ligase complex, leading to its degradation. Deubiquitinated by USP7. In terms of tissue distribution, expression is high in the thymus, stomach, bone marrow and lymphatic tissues (including lymph nodes and intestinal wall). Also expressed in the adrenal gland, skin and in brain structures, with noticeable levels found in the cerebellum.

It localises to the nucleus. The protein localises to the chromosome. The protein resides in the cytoplasm. Its pathway is protein modification; protein ubiquitination. Its function is as follows. Substrate-recognition component of a BCR (BTB-CUL3-RBX1) E3 ubiquitin ligase complex that terminates RNA polymerase II (Pol II) transcription in the promoter-proximal region of genes. The BCR(ARMC5) complex provides a quality checkpoint during transcription elongation by driving premature transcription termination of transcripts that are unfavorably configured for transcriptional elongation: the BCR(ARMC5) complex acts by mediating ubiquitination of Pol II subunit POLR2A phosphorylated at 'Ser-5' of the C-terminal domain (CTD), leading to POLR2A degradation. The BCR(ARMC5) complex acts in parallel of the integrator complex and is specific for RNA Pol II originating from the promoter-proximal zone: it does not ubiquitinate elongation-stalled RNA Pol II. The BCR(ARMC5) complex also acts as a regulator of fatty acid desaturation by mediating ubiquitination and degradation of SCAP-free SREBF1 and SREBF2. Involved in fetal development, T-cell function and adrenal gland growth homeostasis. Plays a role in steroidogenesis, modulates steroidogenic enzymes expression and cortisol production. The polypeptide is Armadillo repeat-containing protein 5 (Mus musculus (Mouse)).